Consider the following 166-residue polypeptide: Ureidoglycolate lyase (166 aa).

The protein belongs to the ureidoglycolate lyase family. Homodimer. Requires Ni(2+) as cofactor.

The catalysed reaction is (S)-ureidoglycolate = urea + glyoxylate. The protein operates within nitrogen metabolism; (S)-allantoin degradation. Catalyzes the catabolism of the allantoin degradation intermediate (S)-ureidoglycolate, generating urea and glyoxylate. Involved in the utilization of allantoin as nitrogen source. This is Ureidoglycolate lyase from Azotobacter vinelandii (strain DJ / ATCC BAA-1303).